The chain runs to 125 residues: Large ribosomal subunit protein bL12 (125 aa).

The protein belongs to the bacterial ribosomal protein bL12 family. In terms of assembly, homodimer. Part of the ribosomal stalk of the 50S ribosomal subunit. Forms a multimeric L10(L12)X complex, where L10 forms an elongated spine to which 2 to 4 L12 dimers bind in a sequential fashion. Binds GTP-bound translation factors.

In terms of biological role, forms part of the ribosomal stalk which helps the ribosome interact with GTP-bound translation factors. Is thus essential for accurate translation. The chain is Large ribosomal subunit protein bL12 from Thioalkalivibrio sulfidiphilus (strain HL-EbGR7).